Reading from the N-terminus, the 555-residue chain is Poly(A) polymerase PAPa (555 aa).

The tract at residues Met1–Lys20 is disordered. ATP-binding positions include Phe86–Ser88, Asp99–Asp101, Asp153, Lys214, Tyr223, and Gly232–Val233. Asp99, Asp101, and Asp153 together coordinate Mg(2+). A disordered region spans residues Lys532–Ala555.

It belongs to the poly(A) polymerase family. It depends on Mg(2+) as a cofactor. Mn(2+) serves as cofactor.

The protein localises to the nucleus. It carries out the reaction RNA(n) + ATP = RNA(n)-3'-adenine ribonucleotide + diphosphate. Its function is as follows. Polymerase that creates the 3'-poly(A) tail of mRNA's. May acquire specificity through interaction with a cleavage and polyadenylation factor. The polypeptide is Poly(A) polymerase PAPa (PAPA) (Candida albicans (strain SC5314 / ATCC MYA-2876) (Yeast)).